A 498-amino-acid chain; its full sequence is METRSVKRKKKKKEEEANWFIRVDRISNLPDSLNHQILLLLPLKSAAQASLLSKRWRSLFLSLPDLDFTSINDLKNPKSFSSNSIYKVLSLRSHRDSNNLRSLRFRVPVTFTSLNSLIRLAVTHQVQDLDIEVTTKDYFNFPRWIVTSQNLRALTLKSANLGFRLPPSSSARGGFQKLTSLSLSRVILHNQPCLSDFFTDPSFPLLEKLTLECCFGLKELKVSCRLLQEFSLKNSLQLEGLEVSGNKLQKLKVESCFYSYSEKSFVKINTPNLKTFLWNSNAVTTSVHFLDKLVCLRKAFVKVFWHHQDLNSQIQSLFTLLSGLCHSYKLQLGNQSVEILSSKKGLLKNHLLPFHNMRFLELQTRLNRHNVQTLSCLFKSCPMLNILTVKIIDDQTSERRQWNKDLWDMSNSEIQYWESQAYELESFLNHLEFVEIHGFVECENEMSLAIFLLRHGKALIKMTLRSSFLCRDSLRRQMIRSQLTGFSMASSKAKISFH.

Residues 23-71 (VDRISNLPDSLNHQILLLLPLKSAAQASLLSKRWRSLFLSLPDLDFTSI) form the F-box domain. 3 LRR repeats span residues 148–172 (SQNLRALTLKSANLGFRLPPSSSAR), 175–200 (FQKLTSLSLSRVILHNQPCLSDFFTD), and 235–259 (SLQLEGLEVSGNKLQKLKVESCFYS). In terms of domain architecture, FBD spans 416 to 466 (YWESQAYELESFLNHLEFVEIHGFVECENEMSLAIFLLRHGKALIKMTLRS).

The protein is Putative F-box/FBD/LRR-repeat protein At4g03220 of Arabidopsis thaliana (Mouse-ear cress).